We begin with the raw amino-acid sequence, 812 residues long: Transcription-repair-coupling factor (812 aa).

The Helicase ATP-binding domain occupies 280–441 (DMSKPIPMDR…MTGIKDLSII (162 aa)). 293-300 (GDVGFGKT) contributes to the ATP binding site. A DEEH box motif is present at residues 394 to 397 (DEEH). Residues 462–621 (LIRKTILREI…NQDLEIRGVG (160 aa)) enclose the Helicase C-terminal domain.

This sequence in the N-terminal section; belongs to the UvrB family. It in the C-terminal section; belongs to the helicase family. RecG subfamily.

It localises to the cytoplasm. Couples transcription and DNA repair by recognizing RNA polymerase (RNAP) stalled at DNA lesions. Mediates ATP-dependent release of RNAP and its truncated transcript from the DNA, and recruitment of nucleotide excision repair machinery to the damaged site. This is Transcription-repair-coupling factor (mfd) from Buchnera aphidicola subsp. Acyrthosiphon pisum (strain APS) (Acyrthosiphon pisum symbiotic bacterium).